A 364-amino-acid chain; its full sequence is Histidinol-phosphate aminotransferase (364 aa).

Lysine 226 is subject to N6-(pyridoxal phosphate)lysine.

It belongs to the class-II pyridoxal-phosphate-dependent aminotransferase family. Histidinol-phosphate aminotransferase subfamily. Homodimer. The cofactor is pyridoxal 5'-phosphate.

The enzyme catalyses L-histidinol phosphate + 2-oxoglutarate = 3-(imidazol-4-yl)-2-oxopropyl phosphate + L-glutamate. It participates in amino-acid biosynthesis; L-histidine biosynthesis; L-histidine from 5-phospho-alpha-D-ribose 1-diphosphate: step 7/9. The sequence is that of Histidinol-phosphate aminotransferase from Sulfurimonas denitrificans (strain ATCC 33889 / DSM 1251) (Thiomicrospira denitrificans (strain ATCC 33889 / DSM 1251)).